A 294-amino-acid polypeptide reads, in one-letter code: Acetyl-coenzyme A carboxylase carboxyl transferase subunit beta (294 aa).

One can recognise a CoA carboxyltransferase N-terminal domain in the interval 25–294 (VWTKCTSCEQ…PLVVPVDGSH (270 aa)). Positions 29, 32, 48, and 51 each coordinate Zn(2+). The C4-type zinc finger occupies 29–51 (CTSCEQVLYSAELERNLEVCPKC).

This sequence belongs to the AccD/PCCB family. Acetyl-CoA carboxylase is a heterohexamer composed of biotin carboxyl carrier protein (AccB), biotin carboxylase (AccC) and two subunits each of ACCase subunit alpha (AccA) and ACCase subunit beta (AccD). The cofactor is Zn(2+).

It is found in the cytoplasm. The enzyme catalyses N(6)-carboxybiotinyl-L-lysyl-[protein] + acetyl-CoA = N(6)-biotinyl-L-lysyl-[protein] + malonyl-CoA. It functions in the pathway lipid metabolism; malonyl-CoA biosynthesis; malonyl-CoA from acetyl-CoA: step 1/1. In terms of biological role, component of the acetyl coenzyme A carboxylase (ACC) complex. Biotin carboxylase (BC) catalyzes the carboxylation of biotin on its carrier protein (BCCP) and then the CO(2) group is transferred by the transcarboxylase to acetyl-CoA to form malonyl-CoA. The protein is Acetyl-coenzyme A carboxylase carboxyl transferase subunit beta of Aliivibrio fischeri (strain MJ11) (Vibrio fischeri).